The primary structure comprises 114 residues: uncharacterized protein (114 aa).

This is an uncharacterized protein from Saccharomyces cerevisiae (strain ATCC 204508 / S288c) (Baker's yeast).